A 219-amino-acid chain; its full sequence is DAN domain family member 5 (219 aa).

The first 19 residues, 1 to 19, serve as a signal peptide directing secretion; it reads MLLFRAASLLPLLCFTVGA. 4 disulfides stabilise this stretch: C118-C165, C132-C179, C142-C195, and C146-C197. Residues 118–198 enclose the CTCK domain; sequence CHALPFIQNV…VELVEECECE (81 aa).

It belongs to the DAN family. As to quaternary structure, interacts with nr1-a.

It localises to the secreted. In terms of biological role, plays an important role in regulating the left-right axis by blocking a tgfb1 cascade in the right posterior paraxial mesoderm. Functions as an inhibitor of bmp, tgfb1, nodal, activin and wnt signaling in the ectoderm. May inhibit mesodermal signals, probably through an inhibition of nodal/activin pathways. Seems to regulates cell fate specification and competence before the onset of neural induction. Expression in the entire ectodermal region prior to gastrulation might act to prevent fate specification in the ectoderm and ensure the maintenance of the stem-cell-like properties exhibited by ectodermal cells. In Xenopus tropicalis (Western clawed frog), this protein is DAN domain family member 5 (dand5).